An 85-amino-acid chain; its full sequence is Large ribosomal subunit protein bL27 (85 aa).

The tract at residues 1–21 is disordered; that stretch reads MAHKKGASSSRNGRDSNAQRL. Positions 7–19 are enriched in polar residues; the sequence is ASSSRNGRDSNAQ.

Belongs to the bacterial ribosomal protein bL27 family.

The protein is Large ribosomal subunit protein bL27 of Beutenbergia cavernae (strain ATCC BAA-8 / DSM 12333 / CCUG 43141 / JCM 11478 / NBRC 16432 / NCIMB 13614 / HKI 0122).